A 308-amino-acid polypeptide reads, in one-letter code: Cytochrome b (308 aa).

4 helical membrane-spanning segments follow: residues 1 to 21 (FGSL…LMAM), 45 to 66 (WLIR…YLHI), 81 to 101 (WNTG…GYVL), and 146 to 166 (FFAL…VHLT). Positions 51 and 65 each coordinate heme b. Heme b is bound by residues histidine 150 and histidine 164. Position 169 (histidine 169) interacts with a ubiquinone. 3 consecutive transmembrane segments (helical) span residues 194-214 (IKDI…AMFS), 256-276 (LGGV…PFLH), and 288-308 (LSQL…WVGS).

This sequence belongs to the cytochrome b family. In terms of assembly, the cytochrome bc1 complex contains 11 subunits: 3 respiratory subunits (MT-CYB, CYC1 and UQCRFS1), 2 core proteins (UQCRC1 and UQCRC2) and 6 low-molecular weight proteins (UQCRH/QCR6, UQCRB/QCR7, UQCRQ/QCR8, UQCR10/QCR9, UQCR11/QCR10 and a cleavage product of UQCRFS1). This cytochrome bc1 complex then forms a dimer. Heme b is required as a cofactor.

The protein resides in the mitochondrion inner membrane. Component of the ubiquinol-cytochrome c reductase complex (complex III or cytochrome b-c1 complex) that is part of the mitochondrial respiratory chain. The b-c1 complex mediates electron transfer from ubiquinol to cytochrome c. Contributes to the generation of a proton gradient across the mitochondrial membrane that is then used for ATP synthesis. The sequence is that of Cytochrome b (MT-CYB) from Scytalopus magellanicus (Magellanic tapaculo).